The primary structure comprises 135 residues: FK506-binding protein 2 (135 aa).

Positions 1–17 (MLLKSLFLLFLTAIAFA) are cleaved as a signal peptide. The PPIase FKBP-type domain maps to 40-127 (GDLISVHYEG…VFVAELVDIA (88 aa)). The Prevents secretion from ER signature appears at 132-135 (HDEL).

Belongs to the FKBP-type PPIase family. FKBP2 subfamily.

The protein resides in the endoplasmic reticulum. The enzyme catalyses [protein]-peptidylproline (omega=180) = [protein]-peptidylproline (omega=0). With respect to regulation, inhibited by both FK506 and rapamycin. Functionally, PPIases accelerate the folding of proteins. It catalyzes the cis-trans isomerization of proline imidic peptide bonds in oligopeptides. The polypeptide is FK506-binding protein 2 (FPR2) (Debaryomyces hansenii (strain ATCC 36239 / CBS 767 / BCRC 21394 / JCM 1990 / NBRC 0083 / IGC 2968) (Yeast)).